The primary structure comprises 520 residues: Zinc finger and BTB domain-containing protein 18 (520 aa).

One can recognise a BTB domain in the interval 24-91; it reads CDCTVLVGDA…MYEGILQFKG (68 aa). Positions 121-140 are disordered; the sequence is ATTDSTKKEEDTSSFSDKVE. 4 consecutive C2H2-type zinc fingers follow at residues 368 to 390, 408 to 430, 436 to 458, and 464 to 487; these read FMCP…LSTH, PTCS…ERTH, YTCT…AVVH, and HACK…RKFH.

Belongs to the krueppel C2H2-type zinc-finger protein family. ZBTB18 subfamily.

The protein resides in the nucleus. Transcriptional repressor that plays a role in various developmental processes. Specifically binds the consensus DNA sequence 5'-[AC]ACATCTG[GT][AC]-3' which contains the E box core, and acts by recruiting chromatin remodeling multiprotein complexes. The polypeptide is Zinc finger and BTB domain-containing protein 18 (zbtb18) (Xenopus laevis (African clawed frog)).